Here is a 420-residue protein sequence, read N- to C-terminus: Senescence-associated protein SPA15, chloroplastic (420 aa).

Residues 1–68 constitute a chloroplast transit peptide; sequence MAKPNGIIYS…YIATRGSSLR (68 aa). The tract at residues 85–111 is disordered; it reads EYRDSSDTSSMQGKDKDPASLGKSGTP.

The protein belongs to the ATA15/OSA15 family. In terms of tissue distribution, expressed in leaves.

It is found in the plastid. The protein localises to the chloroplast. In terms of biological role, may be involved in the regulation of leaf senescence. The sequence is that of Senescence-associated protein SPA15, chloroplastic from Ipomoea batatas (Sweet potato).